Here is a 64-residue protein sequence, read N- to C-terminus: Large ribosomal subunit protein bL28 (64 aa).

The protein belongs to the bacterial ribosomal protein bL28 family.

In Bifidobacterium adolescentis (strain ATCC 15703 / DSM 20083 / NCTC 11814 / E194a), this protein is Large ribosomal subunit protein bL28.